The chain runs to 103 residues: Large ribosomal subunit protein bL21 (103 aa).

The protein belongs to the bacterial ribosomal protein bL21 family. Part of the 50S ribosomal subunit. Contacts protein L20.

This protein binds to 23S rRNA in the presence of protein L20. The sequence is that of Large ribosomal subunit protein bL21 from Borrelia garinii subsp. bavariensis (strain ATCC BAA-2496 / DSM 23469 / PBi) (Borreliella bavariensis).